Consider the following 197-residue polypeptide: Non-structural protein 5 (197 aa).

Low complexity predominate over residues 17–30 (IFKNESSSTTSTLS). 4 disordered regions span residues 17–37 (IFKN…IGRS), 53–72 (LSKS…DPLT), 85–104 (ADAG…SNVG), and 129–166 (STDN…SDSD). Ser-67 carries the post-translational modification Phosphoserine; by host CK1. Polar residues predominate over residues 91 to 104 (MDSSTQSRPSSNVG). Mg(2+) is bound at residue Asp-92. Over residues 152-165 (DSDSEDYVLDDSDS) the composition is skewed to acidic residues. Phosphoserine; by host occurs at positions 153, 155, 163, and 165.

This sequence belongs to the rotavirus NSP5 family. As to quaternary structure, homodimer. Interacts with VP1. Interacts with VP2. Interacts with NSP2; this interaction leads to up-regulation of NSP5 hyperphosphorylation and formation of virus factories. Interacts with NSP6. Participates in the selective exclusion of host proteins from stress granules (SG) and P bodies (PB). Also participates in the sequestration of these remodeled organelles in viral factories. The cofactor is Mg(2+). In terms of processing, O-glycosylated. Post-translationally, hyperphosphorylated on serine residues, when in dimeric form. Phosphorylation by host CK1 is required for the hyperphosphorylation of NSP5 dimer.

It localises to the host cytoplasm. Functionally, plays an essential role in the viral genome replication. Participates, together with NSP2, in the formation of viral factories (viroplasms), which are large inclusions in the host cytoplasm where replication intermediates are assembled and viral RNA replication takes place. Orchestrates the recruitment of viroplasmic proteins such as capsid proteins to these factories. Participates in the selective exclusion of host proteins from stress granules (SG) and P bodies (PB). Also participates in the sequestration of these remodeled organelles in viral factories. This is Non-structural protein 5 from Rotavirus A (strain RVA/Pig/United States/OSU/1977/G5P9[7]) (RV-A).